The sequence spans 430 residues: Glutamate-1-semialdehyde 2,1-aminomutase (430 aa).

Lys-269 carries the N6-(pyridoxal phosphate)lysine modification.

It belongs to the class-III pyridoxal-phosphate-dependent aminotransferase family. HemL subfamily. Homodimer. It depends on pyridoxal 5'-phosphate as a cofactor.

It is found in the cytoplasm. The catalysed reaction is (S)-4-amino-5-oxopentanoate = 5-aminolevulinate. It participates in porphyrin-containing compound metabolism; protoporphyrin-IX biosynthesis; 5-aminolevulinate from L-glutamyl-tRNA(Glu): step 2/2. In Desulfitobacterium hafniense (strain Y51), this protein is Glutamate-1-semialdehyde 2,1-aminomutase.